We begin with the raw amino-acid sequence, 810 residues long: RING finger protein unkempt homolog (810 aa).

The tract at residues 1–24 (MSKGPGPGGSAASSAPPAATAQVL) is disordered. Residues 10–19 (SAASSAPPAA) show a composition bias toward low complexity. 5 consecutive C3H1-type zinc fingers follow at residues 84-113 (YSPD…HRTT), 124-154 (YYKT…HGPH), 215-241 (NYKT…HNSK), 251-285 (KYRS…HTRT), and 293-321 (IYKS…HVEQ). The tract at residues 239–265 (NSKDRRRSPRKHKYRSSPCPNVKHGDE) is disordered. Ser-240 carries the post-translational modification Phosphoserine. Positions 241 to 253 (KDRRRSPRKHKYR) are enriched in basic residues. Residues 324-343 (LSDDLQPSSAVSSPTQPGPV) are disordered. Polar residues predominate over residues 328–338 (LQPSSAVSSPT). Phosphoserine is present on residues Ser-374, Ser-378, Ser-385, and Ser-631. Residues 643-723 (GAAELARLRQ…QEELERLHAG (81 aa)) are a coiled coil. An RING-type; degenerate zinc finger spans residues 766 to 801 (SVKCLKCQEQKRAVLPCQHAALCELCAEGSECPICQ).

This sequence belongs to the unkempt family.

It is found in the cytoplasm. In terms of biological role, sequence-specific RNA-binding protein which plays an important role in the establishment and maintenance of the early morphology of cortical neurons during embryonic development. Acts as a translation repressor and controls a translationally regulated cell morphology program to ensure proper structuring of the nervous system. Translational control depends on recognition of its binding element within target mRNAs which consists of a mandatory UAG trimer upstream of a U/A-rich motif. Associated with polysomes. The polypeptide is RING finger protein unkempt homolog (UNK) (Homo sapiens (Human)).